Consider the following 704-residue polypeptide: 1,4-alpha-glucan-branching enzyme (704 aa).

(1,4-alpha-D-glucosyl)n contacts are provided by Trp-94 and Lys-131. Position 190 is a phosphoserine (Ser-190). The active-site Nucleophile is Asp-356. The active-site Proton donor is the Glu-417.

The protein belongs to the glycosyl hydrolase 13 family. GlgB subfamily.

It is found in the cytoplasm. The catalysed reaction is Transfers a segment of a (1-&gt;4)-alpha-D-glucan chain to a primary hydroxy group in a similar glucan chain.. Its pathway is glycan biosynthesis; glycogen biosynthesis. Functionally, glycogen-branching enzyme participates in the glycogen biosynthetic process along with glycogenin and glycogen synthase. Generates alpha-1,6-glucosidic branches from alpha-1,4-linked glucose chains, to increase solubility of the glycogen polymer. The sequence is that of 1,4-alpha-glucan-branching enzyme (GLC3) from Saccharomyces cerevisiae (strain ATCC 204508 / S288c) (Baker's yeast).